We begin with the raw amino-acid sequence, 442 residues long: MRLSRYFLPILKENPKEAEIVSHRLMLRSGMIRQQSAGIYSWLPIGLKVLNKVCTIIREEQNRAGANEILMPTIQSADLWRESGRYDAYGKEMLRIQDRQKREMLFGPTNEEMVTDIFRSYVRSYKDLPLNLYHIQWKFRDEVRPRFGVMRSREFLMKDAYSFDLDYEGAKMAYYRMFVSYLRTFARVGLQAIPMRADTGPIGGDLSHEFIILAETGESQVYCDRAYLDLAVPGADTDFRNDAQLTDTVTRWTTPYAATDEMHDEADWAKVKPESQVSARGIEVGHIFHFGTKYSEPMGAKVQGPDGKEHLVSMGSYGIGPSRLVAAAIEASHDDAGIIWPKTIAPFGAGIVNMKPGDEGCDGVSEKLYEALTNAGVDPLLDDKDERPGAKFATIDLIGLPTQVIVGPRGVAAGEVEVKDRKTGERQSLGIEAAINMLTAQA.

This sequence belongs to the class-II aminoacyl-tRNA synthetase family. ProS type 2 subfamily. As to quaternary structure, homodimer.

The protein localises to the cytoplasm. It carries out the reaction tRNA(Pro) + L-proline + ATP = L-prolyl-tRNA(Pro) + AMP + diphosphate. In terms of biological role, catalyzes the attachment of proline to tRNA(Pro) in a two-step reaction: proline is first activated by ATP to form Pro-AMP and then transferred to the acceptor end of tRNA(Pro). This chain is Proline--tRNA ligase, found in Brucella melitensis biotype 2 (strain ATCC 23457).